Here is a 403-residue protein sequence, read N- to C-terminus: Chalcone synthase 3 (403 aa).

Residue cysteine 170 is part of the active site.

It belongs to the thiolase-like superfamily. Chalcone/stilbene synthases family.

The catalysed reaction is (E)-4-coumaroyl-CoA + 3 malonyl-CoA + 3 H(+) = 2',4,4',6'-tetrahydroxychalcone + 3 CO2 + 4 CoA. Its pathway is secondary metabolite biosynthesis; flavonoid biosynthesis. Functionally, the primary product of this enzyme is 4,2',4',6'-tetrahydroxychalcone (also termed naringenin-chalcone or chalcone) which can under specific conditions spontaneously isomerize into naringenin. This is Chalcone synthase 3 (CHS3) from Gerbera hybrida (Daisy).